The chain runs to 105 residues: Heat shock protein HspQ (105 aa).

Residues 75–105 (SELQDEHPEQPSMDELAQTIRKQLQAPRLRN) form a disordered region.

This sequence belongs to the HspQ family.

The protein resides in the cytoplasm. Its function is as follows. Involved in the degradation of certain denaturated proteins, including DnaA, during heat shock stress. In Escherichia coli O127:H6 (strain E2348/69 / EPEC), this protein is Heat shock protein HspQ.